A 125-amino-acid polypeptide reads, in one-letter code: MQRIILIIIGWLAVVLGTLGVVLPVLPTTPFILLAAWCFARSSPRFHAWLLYRSWFGSYLRFWQKHHAMPRGVKPRAILLILLTFAISLWFVQMPWVRIMLLVILACLLFYMWRIPVIDEKQEKH.

Topologically, residues 1 to 6 (MQRIIL) are cytoplasmic. Residues 7–26 (IIIGWLAVVLGTLGVVLPVL) form a helical membrane-spanning segment. Topologically, residues 27–45 (PTTPFILLAAWCFARSSPR) are periplasmic. The chain crosses the membrane as a helical span at residues 46–63 (FHAWLLYRSWFGSYLRFW). Residues 64-74 (QKHHAMPRGVK) lie on the Cytoplasmic side of the membrane. The chain crosses the membrane as a helical span at residues 75–92 (PRAILLILLTFAISLWFV). The Periplasmic segment spans residues 93–95 (QMP). The chain crosses the membrane as a helical span at residues 96–118 (WVRIMLLVILACLLFYMWRIPVI). Residues 119–125 (DEKQEKH) are Cytoplasmic-facing.

It localises to the cell inner membrane. The chain is Inner membrane protein YbaN (ybaN) from Escherichia coli O157:H7.